Here is a 306-residue protein sequence, read N- to C-terminus: Ribonuclease Z (306 aa).

Residues H63, H65, D67, H68, H141, D211, and H269 each coordinate Zn(2+). Catalysis depends on D67, which acts as the Proton acceptor.

The protein belongs to the RNase Z family. Homodimer. Zn(2+) serves as cofactor.

It carries out the reaction Endonucleolytic cleavage of RNA, removing extra 3' nucleotides from tRNA precursor, generating 3' termini of tRNAs. A 3'-hydroxy group is left at the tRNA terminus and a 5'-phosphoryl group is left at the trailer molecule.. Zinc phosphodiesterase, which displays some tRNA 3'-processing endonuclease activity. Probably involved in tRNA maturation, by removing a 3'-trailer from precursor tRNA. The polypeptide is Ribonuclease Z (Staphylococcus aureus (strain MSSA476)).